The following is a 307-amino-acid chain: Formate hydrogenlyase subunit 4 (307 aa).

At 1-2 (MS) the chain is on the periplasmic side. Residues 3-23 (VLYPLIQALVLFAVAPLLSGI) form a helical membrane-spanning segment. Topologically, residues 24–67 (TRVARARLHNRRGPGVLQEYRDIIKLLGRQSVGPDASGWVFRLT) are cytoplasmic. A helical membrane pass occupies residues 68–88 (PYVMVGVMLTIATALPVVTVG). At 89-93 (SPLPQ) the chain is on the periplasmic side. Residues 94–114 (LGDLITLLYLFAIARFFFAIS) traverse the membrane as a helical segment. Topologically, residues 115 to 131 (GLDTGSPFTAIGASREA) are cytoplasmic. Residues 132–152 (MLGVLVEPMLLLGLWVAAQVA) traverse the membrane as a helical segment. The Periplasmic segment spans residues 153–167 (GSTNISNITDTVYHW). Residues 168–188 (PLSQSIPLVLALCACAFATFI) traverse the membrane as a helical segment. Residues 189–221 (EMGKLPFDLAEAEQELQEGPLSEYSGSGFGVMK) lie on the Cytoplasmic side of the membrane. A helical membrane pass occupies residues 222–242 (WGISLKQLVVLQMFVGVFIPW). Residues 243–253 (GQMETFTAGGL) lie on the Periplasmic side of the membrane. The chain crosses the membrane as a helical span at residues 254–274 (LLALVIAIVKLVVGVLVIALF). The Cytoplasmic portion of the chain corresponds to 275 to 284 (ENSMARLRLD). The chain crosses the membrane as a helical span at residues 285-305 (ITPRITWAGFGFAFLAFVSLL). Over 306-307 (AA) the chain is Periplasmic.

This sequence belongs to the complex I subunit 1 family. As to quaternary structure, FHL comprises of a formate dehydrogenase, unidentified electron carriers and a hydrogenase (isoenzyme 3). In this non-energy conserving pathway molecular hydrogen and carbodioxide from formate are released.

It localises to the cell inner membrane. In Escherichia coli (strain K12), this protein is Formate hydrogenlyase subunit 4 (hycD).